A 452-amino-acid chain; its full sequence is Pup--protein ligase (452 aa).

Position 9 (Glu-9) interacts with Mg(2+). Arg-53 lines the ATP pocket. Tyr-55 serves as a coordination point for Mg(2+). The Proton acceptor role is filled by Asp-57. Position 63 (Glu-63) interacts with Mg(2+). Thr-66 and Trp-419 together coordinate ATP.

This sequence belongs to the Pup ligase/Pup deamidase family. Pup-conjugating enzyme subfamily.

The catalysed reaction is ATP + [prokaryotic ubiquitin-like protein]-L-glutamate + [protein]-L-lysine = ADP + phosphate + N(6)-([prokaryotic ubiquitin-like protein]-gamma-L-glutamyl)-[protein]-L-lysine.. It participates in protein degradation; proteasomal Pup-dependent pathway. The protein operates within protein modification; protein pupylation. Catalyzes the covalent attachment of the prokaryotic ubiquitin-like protein modifier Pup to the proteasomal substrate proteins, thereby targeting them for proteasomal degradation. This tagging system is termed pupylation. The ligation reaction involves the side-chain carboxylate of the C-terminal glutamate of Pup and the side-chain amino group of a substrate lysine. In Mycolicibacterium vanbaalenii (strain DSM 7251 / JCM 13017 / BCRC 16820 / KCTC 9966 / NRRL B-24157 / PYR-1) (Mycobacterium vanbaalenii), this protein is Pup--protein ligase.